An 89-amino-acid chain; its full sequence is NAD(P)H-quinone oxidoreductase subunit L (89 aa).

2 helical membrane passes run 29–46 and 59–79; these read VLGG…FYWM and LFIY…APFL.

This sequence belongs to the complex I NdhL subunit family. NDH-1 can be composed of about 15 different subunits; different subcomplexes with different compositions have been identified which probably have different functions.

It is found in the cellular thylakoid membrane. It catalyses the reaction a plastoquinone + NADH + (n+1) H(+)(in) = a plastoquinol + NAD(+) + n H(+)(out). It carries out the reaction a plastoquinone + NADPH + (n+1) H(+)(in) = a plastoquinol + NADP(+) + n H(+)(out). NDH-1 shuttles electrons from an unknown electron donor, via FMN and iron-sulfur (Fe-S) centers, to quinones in the respiratory and/or the photosynthetic chain. The immediate electron acceptor for the enzyme in this species is believed to be plastoquinone. Couples the redox reaction to proton translocation, and thus conserves the redox energy in a proton gradient. Cyanobacterial NDH-1 also plays a role in inorganic carbon-concentration. This chain is NAD(P)H-quinone oxidoreductase subunit L, found in Prochlorococcus marinus (strain NATL1A).